The sequence spans 509 residues: Cytochrome P450 monooxygenase CYP512U6 (509 aa).

The chain crosses the membrane as a helical span at residues 12–29 (VFACVAVVIAIYAVRWYT). Cysteine 446 is a binding site for heme.

It belongs to the cytochrome P450 family. Requires heme as cofactor.

Its subcellular location is the membrane. The catalysed reaction is ganoderate DM + reduced [NADPH--hemoprotein reductase] + O2 = hainanate A + oxidized [NADPH--hemoprotein reductase] + H2O + H(+). The enzyme catalyses ganoderate TR + reduced [NADPH--hemoprotein reductase] + O2 = ganoderate Jc + oxidized [NADPH--hemoprotein reductase] + H2O + H(+). It participates in secondary metabolite biosynthesis; terpenoid biosynthesis. Functionally, cytochrome P450 monooxygenase that hydroxylates the ganoderic acids DM and TR at the C-23 position to produce hainanic acid A and ganoderic acid Jc, respectively. In Ganoderma lucidum (Ling zhi medicinal fungus), this protein is Cytochrome P450 monooxygenase CYP512U6.